The sequence spans 571 residues: 2-succinyl-5-enolpyruvyl-6-hydroxy-3-cyclohexene-1-carboxylate synthase (571 aa).

Belongs to the TPP enzyme family. MenD subfamily. In terms of assembly, homodimer. Mg(2+) serves as cofactor. Requires Mn(2+) as cofactor. Thiamine diphosphate is required as a cofactor.

The catalysed reaction is isochorismate + 2-oxoglutarate + H(+) = 5-enolpyruvoyl-6-hydroxy-2-succinyl-cyclohex-3-ene-1-carboxylate + CO2. The protein operates within quinol/quinone metabolism; 1,4-dihydroxy-2-naphthoate biosynthesis; 1,4-dihydroxy-2-naphthoate from chorismate: step 2/7. Its pathway is quinol/quinone metabolism; menaquinone biosynthesis. Functionally, catalyzes the thiamine diphosphate-dependent decarboxylation of 2-oxoglutarate and the subsequent addition of the resulting succinic semialdehyde-thiamine pyrophosphate anion to isochorismate to yield 2-succinyl-5-enolpyruvyl-6-hydroxy-3-cyclohexene-1-carboxylate (SEPHCHC). This Lysinibacillus sphaericus (strain C3-41) protein is 2-succinyl-5-enolpyruvyl-6-hydroxy-3-cyclohexene-1-carboxylate synthase.